Consider the following 402-residue polypeptide: Nicotinate phosphoribosyltransferase (402 aa).

A Phosphohistidine; by autocatalysis modification is found at His221.

This sequence belongs to the NAPRTase family. Post-translationally, transiently phosphorylated on a His residue during the reaction cycle. Phosphorylation strongly increases the affinity for substrates and increases the rate of nicotinate D-ribonucleotide production. Dephosphorylation regenerates the low-affinity form of the enzyme, leading to product release.

The catalysed reaction is nicotinate + 5-phospho-alpha-D-ribose 1-diphosphate + ATP + H2O = nicotinate beta-D-ribonucleotide + ADP + phosphate + diphosphate. It functions in the pathway cofactor biosynthesis; NAD(+) biosynthesis; nicotinate D-ribonucleotide from nicotinate: step 1/1. Catalyzes the synthesis of beta-nicotinate D-ribonucleotide from nicotinate and 5-phospho-D-ribose 1-phosphate at the expense of ATP. The chain is Nicotinate phosphoribosyltransferase from Sodalis glossinidius (strain morsitans).